The primary structure comprises 469 residues: Citrate synthase, mitochondrial (469 aa).

Residues 1-33 (MAPVMRLGSAALRSSIHLTSRQTAFTAARCYSS) constitute a mitochondrion transit peptide. His352 is an active-site residue.

It belongs to the citrate synthase family.

It is found in the mitochondrion matrix. The enzyme catalyses oxaloacetate + acetyl-CoA + H2O = citrate + CoA + H(+). It participates in carbohydrate metabolism; tricarboxylic acid cycle; isocitrate from oxaloacetate: step 1/2. This Neurospora crassa (strain ATCC 24698 / 74-OR23-1A / CBS 708.71 / DSM 1257 / FGSC 987) protein is Citrate synthase, mitochondrial (cit-1).